The following is a 120-amino-acid chain: uncharacterized protein (120 aa).

Residues 13–119 (VIDKDICKGM…YGLWMAANEE (107 aa)) form the PRD domain.

This is an uncharacterized protein from Escherichia coli (strain K12).